The following is a 38-amino-acid chain: Histatin-1 (38 aa).

The tract at residues 1-38 is disordered; it reads DSHEERHHGRHGHHKYGRKFHEKHHSHRGYRSNYLYDN. Ser2 is modified (phosphoserine). The span at 8–30 shows a compositional bias: basic residues; sequence HGRHGHHKYGRKFHEKHHSHRGY.

It belongs to the histatin/statherin family.

Its subcellular location is the secreted. Functionally, histatins (Hsts) are cationic and histidine-rich secreted peptides mainly synthesized by saliva glands of humans and higher primates. Hsts are considered to be major precursors of the protective proteinaceous structure on tooth surfaces (enamel pellicle). In Macaca fascicularis (Crab-eating macaque), this protein is Histatin-1 (HTN1).